A 309-amino-acid polypeptide reads, in one-letter code: Methionine synthase (309 aa).

Positions 201, 203, 224, and 285 each coordinate Zn(2+).

Belongs to the archaeal MetE family. Zn(2+) is required as a cofactor.

It functions in the pathway amino-acid biosynthesis; L-methionine biosynthesis via de novo pathway. With respect to regulation, is activated by phosphates. Catalyzes the transfer of a methyl group to L-homocysteine resulting in methionine formation. Can use methylcobalamin and methylcobinamide as methyl donors, but methylcobalamin is not considered to be the physiological substrate. It was proposed that, in vivo, a so-far-unidentified enzyme catalyzes methyltransfer from 5-methyltetrahydromethanopterin (5-CH3-H4MPT) to a corrinoid protein, and that the MetE gene product catalyzes the further transfer to L-homocysteine. Is not active with L-cysteine, coenzyme M, coenzyme B, glutathione or dithiothreitol as substrate. This is Methionine synthase from Methanothermobacter marburgensis (strain ATCC BAA-927 / DSM 2133 / JCM 14651 / NBRC 100331 / OCM 82 / Marburg) (Methanobacterium thermoautotrophicum).